The chain runs to 147 residues: MVHLTGEEKAAVTALWGKVNVDEVGGEALGRLLVVYPWTQRFFDSFGDLSTPDAVMSNPKVKAHGKKVLGAFSDGLAHLDNLKGTFAQLSELHCDKLHVDPENFRLLGNVLVCVLAHHFGKEFTPQVQAAYQKVVAGVANALAHKYH.

Val2 is subject to N-acetylvaline. A Globin domain is found at 3–147; it reads HLTGEEKAAV…VANALAHKYH (145 aa). Thr13 bears the Phosphothreonine mark. The residue at position 45 (Ser45) is a Phosphoserine. Position 60 is an N6-acetyllysine (Lys60). His64 lines the heme b pocket. Lys83 carries the N6-acetyllysine modification. Residue His93 participates in heme b binding. An S-nitrosocysteine modification is found at Cys94. Residue Lys145 is modified to N6-acetyllysine.

This sequence belongs to the globin family. As to quaternary structure, heterotetramer of two alpha chains and two beta chains. As to expression, red blood cells.

Its function is as follows. Involved in oxygen transport from the lung to the various peripheral tissues. This is Hemoglobin subunit beta (HBB) from Lagothrix lagotricha (Brown woolly monkey).